Here is a 377-residue protein sequence, read N- to C-terminus: Endoplasmic reticulum-Golgi intermediate compartment protein 2 (377 aa).

Residues 1 to 33 (MRRLNRKKTLSLVKELDAFPKVPESYVETSASG) lie on the Cytoplasmic side of the membrane. The chain crosses the membrane as a helical span at residues 34–54 (GTVSLIAFTTMALLTIMEFSV). Topologically, residues 55–319 (YQDTWMKYEY…PFWQFFVRLC (265 aa)) are lumenal. Residues 320-340 (GIVGGIFSTTGMLHGIGKFIV) traverse the membrane as a helical segment. Residues 341-377 (EIICCRFRLGSYKPVNSVPFEDGHTDNHLPLLENNTH) are Cytoplasmic-facing.

The protein belongs to the ERGIC family. As to quaternary structure, may form a heteromeric complex composed of ERGIC1, ERGIC2 and ERGIC3. Interacts with ERGIC3, the interaction is required for the stable expression of both proteins. May interact with EEF1A1.

The protein resides in the endoplasmic reticulum-Golgi intermediate compartment membrane. The protein localises to the golgi apparatus. It localises to the cis-Golgi network membrane. Its subcellular location is the endoplasmic reticulum membrane. It is found in the cytoplasm. The protein resides in the nucleus. In terms of biological role, possible role in transport between endoplasmic reticulum and Golgi. This is Endoplasmic reticulum-Golgi intermediate compartment protein 2 (ERGIC2) from Macaca fascicularis (Crab-eating macaque).